A 485-amino-acid chain; its full sequence is Glutamyl-tRNA(Gln) amidotransferase subunit A (485 aa).

Residues K76 and S152 each act as charge relay system in the active site. S176 acts as the Acyl-ester intermediate in catalysis.

This sequence belongs to the amidase family. GatA subfamily. As to quaternary structure, heterotrimer of A, B and C subunits.

The enzyme catalyses L-glutamyl-tRNA(Gln) + L-glutamine + ATP + H2O = L-glutaminyl-tRNA(Gln) + L-glutamate + ADP + phosphate + H(+). Its function is as follows. Allows the formation of correctly charged Gln-tRNA(Gln) through the transamidation of misacylated Glu-tRNA(Gln) in organisms which lack glutaminyl-tRNA synthetase. The reaction takes place in the presence of glutamine and ATP through an activated gamma-phospho-Glu-tRNA(Gln). The sequence is that of Glutamyl-tRNA(Gln) amidotransferase subunit A from Dechloromonas aromatica (strain RCB).